The primary structure comprises 741 residues: NAD(P)H-quinone oxidoreductase subunit 5, chloroplastic (741 aa).

The next 16 helical transmembrane spans lie at 9–29 (WIIP…LLLF), 40–60 (WAFQ…NLSI), 89–109 (IDPL…LVLI), 125–145 (FAYM…SNLI), 147–167 (IYIF…FWFT), 185–205 (GDFG…SFEF), 219–239 (NEVN…GAIA), 258–278 (TPIS…FLVA), 283–303 (LFIV…ITVF), 327–347 (LGYM…FHLI), 354–374 (ALLF…VGYC), 396–416 (NSFL…CFWS), 425–445 (WLYS…TAFY), 549–569 (LFPI…GIHF), 605–625 (VFSV…YKPV), and 721–741 (YLFF…FVNL).

It belongs to the complex I subunit 5 family. As to quaternary structure, NDH is composed of at least 16 different subunits, 5 of which are encoded in the nucleus.

It localises to the plastid. The protein localises to the chloroplast thylakoid membrane. The catalysed reaction is a plastoquinone + NADH + (n+1) H(+)(in) = a plastoquinol + NAD(+) + n H(+)(out). The enzyme catalyses a plastoquinone + NADPH + (n+1) H(+)(in) = a plastoquinol + NADP(+) + n H(+)(out). NDH shuttles electrons from NAD(P)H:plastoquinone, via FMN and iron-sulfur (Fe-S) centers, to quinones in the photosynthetic chain and possibly in a chloroplast respiratory chain. The immediate electron acceptor for the enzyme in this species is believed to be plastoquinone. Couples the redox reaction to proton translocation, and thus conserves the redox energy in a proton gradient. In Pentatrichia integra (Rock-climbing daisy), this protein is NAD(P)H-quinone oxidoreductase subunit 5, chloroplastic (ndhF).